The primary structure comprises 422 residues: Lactose-binding protein (422 aa).

The N-terminal stretch at 1–28 (MDYSRLLKRSVSAALTAAALLCSTAAFA) is a signal peptide. Positions 246-277 (SNDGIRALTSGDVASVLRGVWITGTVKSQPDQ) are lactose-binding.

This sequence belongs to the bacterial solute-binding protein 1 family.

It localises to the periplasm. Functionally, part of the binding-protein-dependent transport system for lactose. The sequence is that of Lactose-binding protein (lacE) from Rhizobium radiobacter (Agrobacterium tumefaciens).